The primary structure comprises 463 residues: Dipeptidyl peptidase 1 (463 aa).

An N-terminal signal peptide occupies residues 1-24; the sequence is MGVGPASLLAALLLLLSGDRAVRC. Residues Asn29, Asn53, and Asn119 are each glycosylated (N-linked (GlcNAc...) asparagine). Disulfide bonds link Cys30–Cys118, Cys54–Cys136, Cys255–Cys298, Cys291–Cys331, and Cys321–Cys337. Positions 135 to 230 are excised as a propeptide; that stretch reads ACFTGKKVGT…TAEIQQKILH (96 aa). Residue Cys258 is part of the active site. N-linked (GlcNAc...) asparagine glycosylation occurs at Asn276. Phe302 and Tyr304 together coordinate chloride. Tyr347 lines the chloride pocket. Residues His405 and Asn427 contribute to the active site.

The protein belongs to the peptidase C1 family. As to quaternary structure, tetramer of heterotrimers consisting of exclusion domain, heavy- and light chains. Chloride is required as a cofactor.

Its subcellular location is the lysosome. The catalysed reaction is Release of an N-terminal dipeptide, Xaa-Yaa-|-Zaa-, except when Xaa is Arg or Lys, or Yaa or Zaa is Pro.. Its function is as follows. Thiol protease. Has dipeptidylpeptidase activity. Active against a broad range of dipeptide substrates composed of both polar and hydrophobic amino acids. Proline cannot occupy the P1 position and arginine cannot occupy the P2 position of the substrate. Can act as both an exopeptidase and endopeptidase. Activates serine proteases such as elastase, cathepsin G and granzymes A and B. The chain is Dipeptidyl peptidase 1 (CTSC) from Macaca fascicularis (Crab-eating macaque).